The primary structure comprises 426 residues: Serine--tRNA ligase (426 aa).

L-serine is bound at residue 231 to 233; it reads TLE. 262–264 provides a ligand contact to ATP; the sequence is RSE. Glu285 is an L-serine binding site. 349-352 is a binding site for ATP; it reads EISS. Ser385 contacts L-serine.

This sequence belongs to the class-II aminoacyl-tRNA synthetase family. Type-1 seryl-tRNA synthetase subfamily. As to quaternary structure, homodimer. The tRNA molecule binds across the dimer.

It is found in the cytoplasm. The enzyme catalyses tRNA(Ser) + L-serine + ATP = L-seryl-tRNA(Ser) + AMP + diphosphate + H(+). The catalysed reaction is tRNA(Sec) + L-serine + ATP = L-seryl-tRNA(Sec) + AMP + diphosphate + H(+). It participates in aminoacyl-tRNA biosynthesis; selenocysteinyl-tRNA(Sec) biosynthesis; L-seryl-tRNA(Sec) from L-serine and tRNA(Sec): step 1/1. Catalyzes the attachment of serine to tRNA(Ser). Is also able to aminoacylate tRNA(Sec) with serine, to form the misacylated tRNA L-seryl-tRNA(Sec), which will be further converted into selenocysteinyl-tRNA(Sec). The polypeptide is Serine--tRNA ligase (Malacoplasma penetrans (strain HF-2) (Mycoplasma penetrans)).